Reading from the N-terminus, the 386-residue chain is 1-deoxy-D-xylulose 5-phosphate reductoisomerase (386 aa).

NADPH-binding residues include T10, G11, S12, I13, G36, N38, and N122. Residue K123 participates in 1-deoxy-D-xylulose 5-phosphate binding. Residue E124 participates in NADPH binding. D148 lines the Mn(2+) pocket. Positions 149, 150, 174, and 197 each coordinate 1-deoxy-D-xylulose 5-phosphate. Mn(2+) is bound at residue E150. G203 serves as a coordination point for NADPH. The 1-deoxy-D-xylulose 5-phosphate site is built by S210, N215, K216, and E219. E219 lines the Mn(2+) pocket.

Belongs to the DXR family. Mg(2+) is required as a cofactor. Requires Mn(2+) as cofactor.

The catalysed reaction is 2-C-methyl-D-erythritol 4-phosphate + NADP(+) = 1-deoxy-D-xylulose 5-phosphate + NADPH + H(+). It participates in isoprenoid biosynthesis; isopentenyl diphosphate biosynthesis via DXP pathway; isopentenyl diphosphate from 1-deoxy-D-xylulose 5-phosphate: step 1/6. Functionally, catalyzes the NADPH-dependent rearrangement and reduction of 1-deoxy-D-xylulose-5-phosphate (DXP) to 2-C-methyl-D-erythritol 4-phosphate (MEP). The chain is 1-deoxy-D-xylulose 5-phosphate reductoisomerase from Geobacter sulfurreducens (strain ATCC 51573 / DSM 12127 / PCA).